The primary structure comprises 299 residues: tRNA pseudouridine synthase B (299 aa).

Residue Asp39 is the Nucleophile of the active site.

Belongs to the pseudouridine synthase TruB family. Type 1 subfamily.

It carries out the reaction uridine(55) in tRNA = pseudouridine(55) in tRNA. In terms of biological role, responsible for synthesis of pseudouridine from uracil-55 in the psi GC loop of transfer RNAs. This is tRNA pseudouridine synthase B from Syntrophomonas wolfei subsp. wolfei (strain DSM 2245B / Goettingen).